A 155-amino-acid chain; its full sequence is SsrA-binding protein (155 aa).

This sequence belongs to the SmpB family.

It localises to the cytoplasm. Its function is as follows. Required for rescue of stalled ribosomes mediated by trans-translation. Binds to transfer-messenger RNA (tmRNA), required for stable association of tmRNA with ribosomes. tmRNA and SmpB together mimic tRNA shape, replacing the anticodon stem-loop with SmpB. tmRNA is encoded by the ssrA gene; the 2 termini fold to resemble tRNA(Ala) and it encodes a 'tag peptide', a short internal open reading frame. During trans-translation Ala-aminoacylated tmRNA acts like a tRNA, entering the A-site of stalled ribosomes, displacing the stalled mRNA. The ribosome then switches to translate the ORF on the tmRNA; the nascent peptide is terminated with the 'tag peptide' encoded by the tmRNA and targeted for degradation. The ribosome is freed to recommence translation, which seems to be the essential function of trans-translation. This Streptococcus equi subsp. equi (strain 4047) protein is SsrA-binding protein.